A 447-amino-acid chain; its full sequence is UPF0210 protein LBUL_0934 (447 aa).

Belongs to the UPF0210 family. In terms of assembly, homodimer.

The sequence is that of UPF0210 protein LBUL_0934 from Lactobacillus delbrueckii subsp. bulgaricus (strain ATCC BAA-365 / Lb-18).